Reading from the N-terminus, the 220-residue chain is Deoxyribose-phosphate aldolase (220 aa).

Aspartate 89 functions as the Proton donor/acceptor in the catalytic mechanism. Catalysis depends on lysine 151, which acts as the Schiff-base intermediate with acetaldehyde. The active-site Proton donor/acceptor is lysine 180.

Belongs to the DeoC/FbaB aldolase family. DeoC type 1 subfamily.

Its subcellular location is the cytoplasm. It carries out the reaction 2-deoxy-D-ribose 5-phosphate = D-glyceraldehyde 3-phosphate + acetaldehyde. Its pathway is carbohydrate degradation; 2-deoxy-D-ribose 1-phosphate degradation; D-glyceraldehyde 3-phosphate and acetaldehyde from 2-deoxy-alpha-D-ribose 1-phosphate: step 2/2. Catalyzes a reversible aldol reaction between acetaldehyde and D-glyceraldehyde 3-phosphate to generate 2-deoxy-D-ribose 5-phosphate. This is Deoxyribose-phosphate aldolase from Streptococcus equi subsp. equi (strain 4047).